The primary structure comprises 746 residues: Alpha-1,4-glucan:maltose-1-phosphate maltosyltransferase (746 aa).

The tract at residues 1–43 is disordered; it reads MAAVQHRATTRTSNTDNSTTKTKSKATSARKSPATKRKRVSAE. Positions 10-32 are enriched in low complexity; it reads TRTSNTDNSTTKTKSKATSARKS. Lys343, Gln403, and Asp438 together coordinate alpha-maltose 1-phosphate. The Nucleophile role is filled by Asp473. Asn474 is an alpha-maltose 1-phosphate binding site. Glu502 acts as the Proton donor in catalysis. 612–613 contributes to the alpha-maltose 1-phosphate binding site; the sequence is KY.

It belongs to the glycosyl hydrolase 13 family. GlgE subfamily. Homodimer.

It carries out the reaction alpha-maltose 1-phosphate + [(1-&gt;4)-alpha-D-glucosyl](n) = [(1-&gt;4)-alpha-D-glucosyl](n+2) + phosphate. In terms of biological role, maltosyltransferase that uses maltose 1-phosphate (M1P) as the sugar donor to elongate linear or branched alpha-(1-&gt;4)-glucans. Is involved in a branched alpha-glucan biosynthetic pathway from trehalose, together with TreS, Mak and GlgB. This chain is Alpha-1,4-glucan:maltose-1-phosphate maltosyltransferase, found in Bifidobacterium longum (strain NCC 2705).